The following is a 488-amino-acid chain: MTELHYLTVSAAHTALAAGELTAVELTEACLARINATEPQIRAFLHLTPEAALAAARAADERRRRGQALSPLDGIPIGIKDVICTNGVPTTAGSRILAGFRPPYNATVIERLLAAGTVLIGKLNCDEFAMGSSTENSAYQITTNPWDTSRVPGGSSGGSAAAVAAGQVPATLGTDTGGSIRQPAALCGISGLKPTYGRVSRYGLIAYGSSLDQIGPMAWTVADLALIMNVIAGHDPRDGTSAPLPTPDYTAALTGDIRGLRIGIPREYFVEGMEPGVEAATRTAIEVLREQGATLVEVSLPHTKYALPTYYIIAPAEASANLARFDGVRYGFRAEGETMWEQIEQTRGQGFGPEVRRRIMLGTYALSAGYYDAYYRRAQQVRTLIKRDFDQVFNEVDLLATPTSPTVAFPIGQKINDPLAMYLSDVCTLPINLAGVPALVVPCGFSDGLPVGLQLIGRPFDEATLLRVGDAYQRVTDWHTRRPDLARA.

Residues Lys-80 and Ser-155 each act as charge relay system in the active site. Ser-179 acts as the Acyl-ester intermediate in catalysis.

This sequence belongs to the amidase family. GatA subfamily. As to quaternary structure, heterotrimer of A, B and C subunits.

The enzyme catalyses L-glutamyl-tRNA(Gln) + L-glutamine + ATP + H2O = L-glutaminyl-tRNA(Gln) + L-glutamate + ADP + phosphate + H(+). In terms of biological role, allows the formation of correctly charged Gln-tRNA(Gln) through the transamidation of misacylated Glu-tRNA(Gln) in organisms which lack glutaminyl-tRNA synthetase. The reaction takes place in the presence of glutamine and ATP through an activated gamma-phospho-Glu-tRNA(Gln). The polypeptide is Glutamyl-tRNA(Gln) amidotransferase subunit A (Chloroflexus aggregans (strain MD-66 / DSM 9485)).